We begin with the raw amino-acid sequence, 334 residues long: ADP-L-glycero-D-manno-heptose-6-epimerase (334 aa).

Residues 11 to 12, 32 to 33, lysine 39, lysine 54, 77 to 81, and asparagine 94 each bind NADP(+); these read FI, DN, and QGACS. The active-site Proton acceptor is tyrosine 141. Lysine 145 lines the NADP(+) pocket. Asparagine 171 contacts substrate. NADP(+)-binding residues include valine 172 and lysine 180. Lysine 180 (proton acceptor) is an active-site residue. Substrate-binding positions include arginine 182, histidine 189, 203–206, arginine 216, and tyrosine 295; that span reads FGSN.

It belongs to the NAD(P)-dependent epimerase/dehydratase family. HldD subfamily. As to quaternary structure, homopentamer. Requires NADP(+) as cofactor.

It carries out the reaction ADP-D-glycero-beta-D-manno-heptose = ADP-L-glycero-beta-D-manno-heptose. It functions in the pathway nucleotide-sugar biosynthesis; ADP-L-glycero-beta-D-manno-heptose biosynthesis; ADP-L-glycero-beta-D-manno-heptose from D-glycero-beta-D-manno-heptose 7-phosphate: step 4/4. It participates in bacterial outer membrane biogenesis; LOS core biosynthesis. Its function is as follows. Catalyzes the interconversion between ADP-D-glycero-beta-D-manno-heptose and ADP-L-glycero-beta-D-manno-heptose via an epimerization at carbon 6 of the heptose. This is ADP-L-glycero-D-manno-heptose-6-epimerase from Neisseria meningitidis serogroup B (strain ATCC BAA-335 / MC58).